Consider the following 362-residue polypeptide: Tyrosine recombinase XerH (362 aa).

In terms of domain architecture, Core-binding (CB) spans 43 to 140 (ECLNELNQAC…ALLGLFSYID (98 aa)). Positions 170-357 (KLPTHLNNEE…DKQRLEEAAS (188 aa)) constitute a Tyr recombinase domain. Residues arginine 213, lysine 239, histidine 309, arginine 312, and histidine 335 contribute to the active site. The active-site O-(3'-phospho-DNA)-tyrosine intermediate is tyrosine 344.

This sequence belongs to the 'phage' integrase family. XerH subfamily.

The protein localises to the cytoplasm. With respect to regulation, ftsK is required for recombination. In terms of biological role, site-specific tyrosine recombinase, which acts by catalyzing the cutting and rejoining of the recombining DNA molecules. Involved in chromosome segregation. May contribute to chromosome decatenation. The polypeptide is Tyrosine recombinase XerH (Helicobacter pylori (strain ATCC 700392 / 26695) (Campylobacter pylori)).